A 198-amino-acid polypeptide reads, in one-letter code: Vacuolar iron transporter homolog 4 (198 aa).

Residues 1–32 lie on the Cytoplasmic side of the membrane; that stretch reads MESNNNNLNLDMEKDQETTFDYSKRAQWLRAA. A helical membrane pass occupies residues 33–53; the sequence is VLGANDGLVSTASLMMGIGAV. Over 54–60 the chain is Vacuolar; it reads KQDVRIM. The helical transmembrane segment at 61 to 81 threads the bilayer; the sequence is LLTGFAGLVAGACSMAIGEFI. Over 82-114 the chain is Cytoplasmic; the sequence is SVYSQYDIEVAQMKRESGGETKKEKLPSPTQAA. A helical membrane pass occupies residues 115–135; sequence IASALAFTLGAIVPLLAAAFV. Topologically, residues 136–141 are vacuolar; the sequence is KEYKVR. A helical transmembrane segment spans residues 142 to 162; sequence IGVIVAAVTLALVMFGWLGAV. Residues 163 to 174 lie on the Cytoplasmic side of the membrane; sequence LGKAPVVKSLVR. Residues 175-195 traverse the membrane as a helical segment; that stretch reads VLIGGWLAMAITFGFTKLVGS. The Vacuolar segment spans residues 196–198; that stretch reads HGL.

The protein belongs to the CCC1 family.

Its subcellular location is the vacuole membrane. It catalyses the reaction Fe(2+)(in) = Fe(2+)(out). In terms of biological role, probable vacuolar iron transporter that may be involved in the regulation of iron distribution throughout the plant. The chain is Vacuolar iron transporter homolog 4 from Arabidopsis thaliana (Mouse-ear cress).